We begin with the raw amino-acid sequence, 340 residues long: Ketol-acid reductoisomerase (NADP(+)) (340 aa).

The KARI N-terminal Rossmann domain maps to 1–182 (MTVTMQYEKD…GSARVGLLET (182 aa)). NADP(+) is bound by residues 26-29 (YGSQ), arginine 49, serine 53, and 83-86 (DEIQ). Histidine 108 is an active-site residue. Position 134 (glycine 134) interacts with NADP(+). Positions 183-328 (TFKEETEEDL…AELRKAMPFV (146 aa)) constitute a KARI C-terminal knotted domain. Mg(2+) is bound by residues aspartate 191, glutamate 195, glutamate 227, and glutamate 231. Serine 252 is a substrate binding site.

The protein belongs to the ketol-acid reductoisomerase family. The cofactor is Mg(2+).

It carries out the reaction (2R)-2,3-dihydroxy-3-methylbutanoate + NADP(+) = (2S)-2-acetolactate + NADPH + H(+). It catalyses the reaction (2R,3R)-2,3-dihydroxy-3-methylpentanoate + NADP(+) = (S)-2-ethyl-2-hydroxy-3-oxobutanoate + NADPH + H(+). The protein operates within amino-acid biosynthesis; L-isoleucine biosynthesis; L-isoleucine from 2-oxobutanoate: step 2/4. Its pathway is amino-acid biosynthesis; L-valine biosynthesis; L-valine from pyruvate: step 2/4. In terms of biological role, involved in the biosynthesis of branched-chain amino acids (BCAA). Catalyzes an alkyl-migration followed by a ketol-acid reduction of (S)-2-acetolactate (S2AL) to yield (R)-2,3-dihydroxy-isovalerate. In the isomerase reaction, S2AL is rearranged via a Mg-dependent methyl migration to produce 3-hydroxy-3-methyl-2-ketobutyrate (HMKB). In the reductase reaction, this 2-ketoacid undergoes a metal-dependent reduction by NADPH to yield (R)-2,3-dihydroxy-isovalerate. The chain is Ketol-acid reductoisomerase (NADP(+)) from Streptococcus suis (strain 98HAH33).